The primary structure comprises 593 residues: METDLNDYTVIKEGEAEVLMHKKNQVFFNKAQVNNRDMSIAVLRAFIIKRKQEHEAMLSKRARSSGKVVEKDVSETSKEETPTENGDDNGKTNGEHEVTTQDGPKEAAKTAYESARRELKPPRVLEALSASGLRALRYAREVEGIGQVVALDNDPASVEACQRNIKFNGLMSTSKVESHLTDARVHMLSHPKDFDVVDLDPYGAPSIFLDSAVQSVADGGLLMCTATDMAVLCGANGEVCYSKYGSYPLKGKYCHEMALRILLASIESHANRYKRYIVPVLSVQMDFYVRVFVRVYTSASAMKNTPLKLSYVYQCIGCDSFHLQSVGRSLPKNNSVRYLPGVGPVVPQDCTHCGKKYNMGGPIWSAPIHDQEWVNSILNGVKSMKDRYPAYDRICAVLTTISEELPDVPLFLSLHSLSATLKCTSPSAALFRSAVINAKYRVSGSHVNPLGIKTDAPMEIIWDIMRCWVKNHPIKPQSPEHPGSVILSKEPSHQADFSRHVGSLSKAQAKKVARFLPNPEKHWGPKIRAGRTITSKHVSLLGHEAVNGHLNNNHKEAGDEEEEEEEEEPEEDIIEGEPELKRQKTTEDFASTS.

The region spanning 9–465 (TVIKEGEAEV…APMEIIWDIM (457 aa)) is the Trm1 methyltransferase domain. S-adenosyl-L-methionine is bound at residue arginine 36. A disordered region spans residues 56 to 118 (AMLSKRARSS…KTAYESARRE (63 aa)). Composition is skewed to basic and acidic residues over residues 68 to 81 (VVEK…KEET) and 88 to 118 (DNGK…ARRE). 3 residues coordinate S-adenosyl-L-methionine: arginine 134, aspartate 152, and valine 185. Residues cysteine 315, cysteine 318, cysteine 350, and cysteine 353 each contribute to the Zn(2+) site. The segment at 546–593 (VNGHLNNNHKEAGDEEEEEEEEEPEEDIIEGEPELKRQKTTEDFASTS) is disordered. Residues 558–577 (GDEEEEEEEEEPEEDIIEGE) show a composition bias toward acidic residues. A compositionally biased stretch (basic and acidic residues) spans 578-587 (PELKRQKTTE).

It belongs to the class I-like SAM-binding methyltransferase superfamily. Trm1 family.

It carries out the reaction guanosine(26) in tRNA + 2 S-adenosyl-L-methionine = N(2)-dimethylguanosine(26) in tRNA + 2 S-adenosyl-L-homocysteine + 2 H(+). Its function is as follows. Dimethylates a single guanine residue at position 26 of most tRNAs using S-adenosyl-L-methionine as donor of the methyl groups. The chain is tRNA (guanine(26)-N(2))-dimethyltransferase 1 from Arabidopsis thaliana (Mouse-ear cress).